A 480-amino-acid chain; its full sequence is Proline--tRNA ligase (480 aa).

This sequence belongs to the class-II aminoacyl-tRNA synthetase family. ProS type 3 subfamily. In terms of assembly, homodimer.

The protein resides in the cytoplasm. The catalysed reaction is tRNA(Pro) + L-proline + ATP = L-prolyl-tRNA(Pro) + AMP + diphosphate. Functionally, catalyzes the attachment of proline to tRNA(Pro) in a two-step reaction: proline is first activated by ATP to form Pro-AMP and then transferred to the acceptor end of tRNA(Pro). The sequence is that of Proline--tRNA ligase from Chloroflexus aurantiacus (strain ATCC 29364 / DSM 637 / Y-400-fl).